A 354-amino-acid polypeptide reads, in one-letter code: Biotin synthase (354 aa).

Residues 40–258 form the Radical SAM core domain; that stretch reads NEVQVSTLLS…IAVARILMPR (219 aa). The [4Fe-4S] cluster site is built by C55, C59, and C62. Residues C99, C130, C190, and R262 each coordinate [2Fe-2S] cluster.

This sequence belongs to the radical SAM superfamily. Biotin synthase family. As to quaternary structure, homodimer. The cofactor is [4Fe-4S] cluster. [2Fe-2S] cluster serves as cofactor.

It catalyses the reaction (4R,5S)-dethiobiotin + (sulfur carrier)-SH + 2 reduced [2Fe-2S]-[ferredoxin] + 2 S-adenosyl-L-methionine = (sulfur carrier)-H + biotin + 2 5'-deoxyadenosine + 2 L-methionine + 2 oxidized [2Fe-2S]-[ferredoxin]. The protein operates within cofactor biosynthesis; biotin biosynthesis; biotin from 7,8-diaminononanoate: step 2/2. Functionally, catalyzes the conversion of dethiobiotin (DTB) to biotin by the insertion of a sulfur atom into dethiobiotin via a radical-based mechanism. The chain is Biotin synthase from Hahella chejuensis (strain KCTC 2396).